The chain runs to 261 residues: Probable trans-aconitate 2-methyltransferase (261 aa).

Belongs to the methyltransferase superfamily. Tam family.

It localises to the cytoplasm. It catalyses the reaction trans-aconitate + S-adenosyl-L-methionine = (E)-3-(methoxycarbonyl)pent-2-enedioate + S-adenosyl-L-homocysteine. In terms of biological role, catalyzes the S-adenosylmethionine monomethyl esterification of trans-aconitate. The chain is Probable trans-aconitate 2-methyltransferase from Mycobacterium bovis (strain ATCC BAA-935 / AF2122/97).